Here is a 797-residue protein sequence, read N- to C-terminus: GDH/6PGL endoplasmic bifunctional protein (797 aa).

A signal peptide spans Met-1–Ala-24. The residue at position 25 (Gln-25) is a Pyrrolidone carboxylic acid. The hexose-6-phosphate dehydrogenase stretch occupies residues Gln-25–Gly-531. NADP(+) contacts are provided by residues Gly-37–Lys-44 and Tyr-154. The N-linked (GlcNAc...) asparagine glycan is linked to Asn-162. Lys-179 contributes to the NADP(+) binding site. Residues Lys-179, His-209–Lys-213, Glu-248, and Asp-267 each bind D-glucose 6-phosphate. The residue at position 213 (Lys-213) is an N6-succinyllysine. His-272 functions as the Proton acceptor in the catalytic mechanism. The N-linked (GlcNAc...) asparagine glycan is linked to Asn-287. 2 residues coordinate D-glucose 6-phosphate: Lys-365 and Arg-370. NADP(+) is bound at residue Arg-375. The segment at Gln-532–Arg-545 is linker. A 6-phosphogluconolactonase region spans residues Pro-546–Gly-797. Trp-623 provides a ligand contact to NADP(+). Asn-689 is a glycosylation site (N-linked (GlcNAc...) asparagine).

The protein in the N-terminal section; belongs to the glucose-6-phosphate dehydrogenase family. This sequence in the C-terminal section; belongs to the glucosamine/galactosamine-6-phosphate isomerase family. 6-phosphogluconolactonase subfamily. In terms of assembly, homodimer.

It is found in the endoplasmic reticulum lumen. It carries out the reaction D-glucose 6-phosphate + NAD(+) = 6-phospho-D-glucono-1,5-lactone + NADH + H(+). It catalyses the reaction D-glucose 6-phosphate + NADP(+) = 6-phospho-D-glucono-1,5-lactone + NADPH + H(+). The catalysed reaction is 6-phospho-D-glucono-1,5-lactone + H2O = 6-phospho-D-gluconate + H(+). The enzyme catalyses 2-deoxy-D-glucose 6-phosphate + NAD(+) = 2-deoxy-6-phospho-D-glucono-1,5-lactone + NADH + H(+). It carries out the reaction 2-deoxy-D-glucose 6-phosphate + NADP(+) = 2-deoxy-6-phospho-D-glucono-1,5-lactone + NADPH + H(+). It catalyses the reaction D-galactose 6-phosphate + NADP(+) = 6-phospho-D-galactono-1,5-lactone + NADPH + H(+). The catalysed reaction is D-galactose 6-phosphate + NAD(+) = 6-phospho-D-galactono-1,5-lactone + NADH + H(+). The enzyme catalyses D-glucosamine 6-phosphate + NADP(+) = 2-amino-2-deoxy-6-phospho-D-glucono-1,5-lactone + NADPH + 2 H(+). It carries out the reaction D-glucose + NAD(+) = D-glucono-1,5-lactone + NADH + H(+). It catalyses the reaction D-glucose + NADP(+) = D-glucono-1,5-lactone + NADPH + H(+). The catalysed reaction is D-glucose 6-sulfate + NADP(+) = 6-sulfo-D-glucono-1,5-lactone + NADPH + H(+). The protein operates within carbohydrate degradation; pentose phosphate pathway; D-ribulose 5-phosphate from D-glucose 6-phosphate (oxidative stage). It functions in the pathway carbohydrate degradation; pentose phosphate pathway; D-ribulose 5-phosphate from D-glucose 6-phosphate (oxidative stage): step 2/3. In terms of biological role, bifunctional enzyme localized in the lumen of the endoplasmic reticulum that catalyzes the first two steps of the oxidative branch of the pentose phosphate pathway/shunt, an alternative to glycolysis and a major source of reducing power and metabolic intermediates for biosynthetic processes. Has a hexose-6-phosphate dehydrogenase activity, with broad substrate specificity compared to glucose-6-phosphate 1-dehydrogenase/G6PD, and catalyzes the first step of the pentose phosphate pathway. In addition, acts as a 6-phosphogluconolactonase and catalyzes the second step of the pentose phosphate pathway. May have a dehydrogenase activity for alternative substrates including glucosamine 6-phosphate and glucose 6-sulfate. The main function of this enzyme is to provide reducing equivalents such as NADPH to maintain the adequate levels of reductive cofactors in the oxidizing environment of the endoplasmic reticulum. By producing NADPH that is needed by reductases of the lumen of the endoplasmic reticulum like corticosteroid 11-beta-dehydrogenase isozyme 1/HSD11B1, indirectly regulates their activity. This Oryctolagus cuniculus (Rabbit) protein is GDH/6PGL endoplasmic bifunctional protein.